Reading from the N-terminus, the 122-residue chain is Small ribosomal subunit protein uS13 (122 aa).

Positions 99 to 122 (RGQRTHTNARTRKGPAKAIAGKKK) are disordered.

It belongs to the universal ribosomal protein uS13 family. In terms of assembly, part of the 30S ribosomal subunit. Forms a loose heterodimer with protein S19. Forms two bridges to the 50S subunit in the 70S ribosome.

Located at the top of the head of the 30S subunit, it contacts several helices of the 16S rRNA. In the 70S ribosome it contacts the 23S rRNA (bridge B1a) and protein L5 of the 50S subunit (bridge B1b), connecting the 2 subunits; these bridges are implicated in subunit movement. Contacts the tRNAs in the A and P-sites. This Rhodopseudomonas palustris (strain TIE-1) protein is Small ribosomal subunit protein uS13.